The following is a 125-amino-acid chain: Holo-[acyl-carrier-protein] synthase (125 aa).

2 residues coordinate Mg(2+): Asp8 and Glu57.

It belongs to the P-Pant transferase superfamily. AcpS family. The cofactor is Mg(2+).

The protein localises to the cytoplasm. It carries out the reaction apo-[ACP] + CoA = holo-[ACP] + adenosine 3',5'-bisphosphate + H(+). Transfers the 4'-phosphopantetheine moiety from coenzyme A to a Ser of acyl-carrier-protein. This is Holo-[acyl-carrier-protein] synthase from Neisseria meningitidis serogroup C (strain 053442).